We begin with the raw amino-acid sequence, 47 residues long: Sperm protamine P1 (47 aa).

This sequence belongs to the protamine P1 family. As to expression, testis.

The protein localises to the nucleus. Its subcellular location is the chromosome. In terms of biological role, protamines substitute for histones in the chromatin of sperm during the haploid phase of spermatogenesis. They compact sperm DNA into a highly condensed, stable and inactive complex. The sequence is that of Sperm protamine P1 (PRM1) from Orcinus orca (Killer whale).